Consider the following 923-residue polypeptide: Mitochondrial 10-formyltetrahydrofolate dehydrogenase (923 aa).

Residues 1–19 (MLWRGSQALRHFSTSRVYF) constitute a mitochondrion; not cleaved transit peptide. The hydrolase domain stretch occupies residues 23–331 (LKLALIGQSL…PASQYFSAGE (309 aa)). Serine 31 is subject to Phosphoserine. Residue lysine 60 is modified to N6-succinyllysine. 110-112 (QFI) contacts (6R)-10-formyltetrahydrofolate. Catalysis depends on histidine 128, which acts as the Proton donor. Aspartate 164 is a binding site for (6R)-10-formyltetrahydrofolate. The region spanning 339-416 (AEELKVAETI…DFIQKVVRRL (78 aa)) is the Carrier domain. At serine 375 the chain carries O-(pantetheine 4'-phosphoryl)serine. An aldehyde dehydrogenase domain region spans residues 438–923 (TVKIPYQCFI…LKIKTVTLEY (486 aa)). NADP(+) is bound by residues 592 to 594 (IPW) and 618 to 621 (KPAQ). Residue serine 650 is modified to Phosphoserine. Residues 651 to 656 (GGVAGQ) and 671 to 672 (GS) contribute to the NADP(+) site. Lysine 681 carries the post-translational modification N6-succinyllysine. Glutamate 694 acts as the Proton acceptor in catalysis. NADP(+) is bound at residue 694–695 (EL). Cysteine 728 (proton donor) is an active-site residue. Residues lysine 778 and 825 to 827 (ESF) contribute to the NADP(+) site. Lysine 903 is subject to N6-acetyllysine.

The protein in the N-terminal section; belongs to the GART family. It in the C-terminal section; belongs to the aldehyde dehydrogenase family. ALDH1L subfamily. In terms of processing, phosphopantetheinylation at Ser-375 by AASDHPPT is required for the formyltetrahydrofolate dehydrogenase activity.

Its subcellular location is the mitochondrion. The enzyme catalyses (6R)-10-formyltetrahydrofolate + NADP(+) + H2O = (6S)-5,6,7,8-tetrahydrofolate + CO2 + NADPH + H(+). Mitochondrial 10-formyltetrahydrofolate dehydrogenase that catalyzes the NADP(+)-dependent conversion of 10-formyltetrahydrofolate to tetrahydrofolate and carbon dioxide. In Mus musculus (Mouse), this protein is Mitochondrial 10-formyltetrahydrofolate dehydrogenase.